The following is a 306-amino-acid chain: Ribosomal RNA small subunit methyltransferase H (306 aa).

S-adenosyl-L-methionine contacts are provided by residues 37-39 (GGH), D56, D102, and Q109.

This sequence belongs to the methyltransferase superfamily. RsmH family.

The protein localises to the cytoplasm. The catalysed reaction is cytidine(1402) in 16S rRNA + S-adenosyl-L-methionine = N(4)-methylcytidine(1402) in 16S rRNA + S-adenosyl-L-homocysteine + H(+). Specifically methylates the N4 position of cytidine in position 1402 (C1402) of 16S rRNA. This Nautilia profundicola (strain ATCC BAA-1463 / DSM 18972 / AmH) protein is Ribosomal RNA small subunit methyltransferase H.